The sequence spans 624 residues: Probable pectinesterase/pectinesterase inhibitor 47 (624 aa).

The N-terminal stretch at 1–19 (MQTHSSSLVFLALLCLSWA) is a signal peptide. A disordered region spans residues 24–88 (PTRPPSQPPS…PSPLPPNIAC (65 aa)). A compositionally biased stretch (pro residues) spans 25–84 (TRPPSQPPSHPPIQPSSQPPTQPPSQPPTQPPTQPPSHPPTQPPTPPPSQSPSQPSPLPP). Residues 74–236 (QSPSQPSPLP…TRLYSVSLGL (163 aa)) are pectinesterase inhibitor 47. N-linked (GlcNAc...) asparagine glycosylation is found at Asn-225, Asn-330, Asn-369, and Asn-376. Positions 307 to 606 (AVTVGPYETD…FTVYNFTLGD (300 aa)) are pectinesterase 47. Thr-385 serves as a coordination point for substrate. Asn-387 is a glycosylation site (N-linked (GlcNAc...) asparagine). A substrate-binding site is contributed by Gln-415. Residue Asp-438 is the Proton donor; for pectinesterase activity of the active site. A disulfide bridge connects residues Cys-452 and Cys-472. The active-site Nucleophile; for pectinesterase activity is Asp-459. The N-linked (GlcNAc...) asparagine glycan is linked to Asn-505. Residues Arg-527 and Trp-529 each contribute to the substrate site. Asn-555, Asn-596, and Asn-601 each carry an N-linked (GlcNAc...) asparagine glycan.

It in the N-terminal section; belongs to the PMEI family. In the C-terminal section; belongs to the pectinesterase family.

The protein resides in the secreted. It localises to the cell wall. The enzyme catalyses [(1-&gt;4)-alpha-D-galacturonosyl methyl ester](n) + n H2O = [(1-&gt;4)-alpha-D-galacturonosyl](n) + n methanol + n H(+). The protein operates within glycan metabolism; pectin degradation; 2-dehydro-3-deoxy-D-gluconate from pectin: step 1/5. Acts in the modification of cell walls via demethylesterification of cell wall pectin. The polypeptide is Probable pectinesterase/pectinesterase inhibitor 47 (PME47) (Arabidopsis thaliana (Mouse-ear cress)).